Reading from the N-terminus, the 1007-residue chain is Serine/threonine-protein kinase atg1 (1007 aa).

Positions 30–336 (YTRLSEIGRG…FDVYFAHKVL (307 aa)) constitute a Protein kinase domain. ATP contacts are provided by residues 36–44 (IGRGSFAVV) and K59. The active-site Proton acceptor is D174. 4 disordered regions span residues 343-489 (LVAD…KEHA), 524-586 (GGQA…PTSA), 795-817 (RLPSDHPSHPSNLSVGSSLGSGT), and 878-900 (SRPGQSGGADRADARRDNEDGGQ). A compositionally biased stretch (basic and acidic residues) spans 373–387 (MKRENALSGGVRDEP). The segment covering 396-410 (AMTQSPRPETPSTPM) has biased composition (polar residues). Residues 477 to 489 (KPVEKAKDEKEHA) show a composition bias toward basic and acidic residues. The segment covering 534–555 (SGAAPGTPPAGGSSPHASPSKA) has biased composition (low complexity). Over residues 563–579 (SRADSAHVRQNSYDRRY) the composition is skewed to basic and acidic residues. Over residues 805–817 (SNLSVGSSLGSGT) the composition is skewed to low complexity. Residues 887-896 (DRADARRDNE) show a composition bias toward basic and acidic residues.

The protein belongs to the protein kinase superfamily. Ser/Thr protein kinase family. APG1/unc-51/ULK1 subfamily. In terms of assembly, homodimer. Forms a ternary complex with ATG13 and ATG17.

The protein localises to the cytoplasm. It localises to the preautophagosomal structure membrane. It carries out the reaction L-seryl-[protein] + ATP = O-phospho-L-seryl-[protein] + ADP + H(+). It catalyses the reaction L-threonyl-[protein] + ATP = O-phospho-L-threonyl-[protein] + ADP + H(+). In terms of biological role, serine/threonine protein kinase involved in the cytoplasm to vacuole transport (Cvt) and found to be essential in autophagy, where it is required for the formation of autophagosomes. Involved in the clearance of protein aggregates which cannot be efficiently cleared by the proteasome. Required for selective autophagic degradation of the nucleus (nucleophagy) as well as for mitophagy which contributes to regulate mitochondrial quantity and quality by eliminating the mitochondria to a basal level to fulfill cellular energy requirements and preventing excess ROS production. Also involved in endoplasmic reticulum-specific autophagic process, in selective removal of ER-associated degradation (ERAD) substrates. Plays a key role in ATG9 and ATG23 cycling through the pre-autophagosomal structure and is necessary to promote ATG18 binding to ATG9 through phosphorylation of ATG9. Catalyzes phosphorylation of ATG4, decreasing the interaction between ATG4 and ATG8 and impairing deconjugation of PE-conjugated forms of ATG8. In Aspergillus niger (strain ATCC MYA-4892 / CBS 513.88 / FGSC A1513), this protein is Serine/threonine-protein kinase atg1.